Reading from the N-terminus, the 572-residue chain is Periplasmic pectate lyase (572 aa).

Positions 1–23 (MKKRALLLSMSVLAMLYIPAGQA) are cleaved as a signal peptide.

This sequence belongs to the polysaccharide lyase 2 family.

The protein resides in the periplasm. It carries out the reaction Eliminative cleavage of (1-&gt;4)-alpha-D-galacturonan to give oligosaccharides with 4-deoxy-alpha-D-galact-4-enuronosyl groups at their non-reducing ends.. It participates in glycan metabolism; pectin degradation; 2-dehydro-3-deoxy-D-gluconate from pectin: step 2/5. This chain is Periplasmic pectate lyase (pelY), found in Yersinia pseudotuberculosis serotype I (strain IP32953).